The following is a 605-amino-acid chain: Granule-bound starch synthase 1, chloroplastic/amyloplastic (605 aa).

A chloroplast-targeting transit peptide spans 1–72 (MAALATSQLV…GGRFPSLVVC (72 aa)). Lys-91 lines the ADP-alpha-D-glucose pocket.

It belongs to the glycosyltransferase 1 family. Bacterial/plant glycogen synthase subfamily.

It is found in the plastid. Its subcellular location is the chloroplast. The protein localises to the amyloplast. The catalysed reaction is an NDP-alpha-D-glucose + [(1-&gt;4)-alpha-D-glucosyl](n) = [(1-&gt;4)-alpha-D-glucosyl](n+1) + a ribonucleoside 5'-diphosphate + H(+). It functions in the pathway glycan biosynthesis; starch biosynthesis. In terms of biological role, required for the synthesis of amylose in endosperm. In Zea mays (Maize), this protein is Granule-bound starch synthase 1, chloroplastic/amyloplastic (WAXY).